We begin with the raw amino-acid sequence, 139 residues long: Large ribosomal subunit protein uL22 (139 aa).

The disordered stretch occupies residues 1 to 22; that stretch reads MVSENEKTRRPKRSIQHRQNKD. Positions 9–18 are enriched in basic residues; it reads RRPKRSIQHR.

The protein belongs to the universal ribosomal protein uL22 family. In terms of assembly, part of the 50S ribosomal subunit.

Its function is as follows. This protein binds specifically to 23S rRNA; its binding is stimulated by other ribosomal proteins, e.g. L4, L17, and L20. It is important during the early stages of 50S assembly. It makes multiple contacts with different domains of the 23S rRNA in the assembled 50S subunit and ribosome. In terms of biological role, the globular domain of the protein is located near the polypeptide exit tunnel on the outside of the subunit, while an extended beta-hairpin is found that lines the wall of the exit tunnel in the center of the 70S ribosome. The polypeptide is Large ribosomal subunit protein uL22 (Pseudothermotoga lettingae (strain ATCC BAA-301 / DSM 14385 / NBRC 107922 / TMO) (Thermotoga lettingae)).